The sequence spans 844 residues: Meiosis-specific protein PAIR3 (844 aa).

4 disordered regions span residues 41–389 (TSSV…RERR), 418–506 (KLSS…RFSD), 532–604 (DDLF…QISI), and 616–669 (WLSD…EPEK). Residues 106–120 (QPDDNAIEQTGTFSF) are compositionally biased toward polar residues. Basic and acidic residues-rich tracts occupy residues 122 to 134 (TRRE…DQLD) and 145 to 164 (RQVE…RMKL). 2 stretches are compositionally biased toward polar residues: residues 191 to 208 (QPKS…QKVF) and 218 to 229 (TPAQFNSQTANK). 2 stretches are compositionally biased toward basic and acidic residues: residues 256–270 (RKKE…DKSG) and 324–363 (AKVE…KGEK). Composition is skewed to polar residues over residues 364 to 382 (TNSF…SCSR) and 420 to 440 (SSPQ…SPQQ). The segment covering 441–456 (KENDNTHIPEASDRTA) has biased composition (basic and acidic residues). A compositionally biased stretch (low complexity) spans 459–473 (NSFNSTPSPAANPSP). Polar residues predominate over residues 545–554 (RSRSTSFTSD). Residues 616–640 (WLSDVDSPDKSSIEHLGRKSHLKEG) show a composition bias toward basic and acidic residues. A compositionally biased stretch (polar residues) spans 646–661 (QLTSPTHFATSGTQET). Positions 731-765 (VNAGKSKRKRLESTFEEQQEKLRILHEKFKEEVNQ) form a coiled coil.

In terms of tissue distribution, expressed in pollen mother cells and the ovule tissues during meiosis.

It is found in the chromosome. The protein resides in the nucleus. Its function is as follows. Plays a crucial role in homologous chromosome pairing and synapsis in meiosis. Does not seem required for cytokinesis. Is essential for meiotic bouquet formation, homologous chromosome pairing and normal recombination, and synaptonemal complex (SC) assembly. Required for the proper association of PAIR2 with chromosomes. The protein is Meiosis-specific protein PAIR3 of Oryza sativa subsp. japonica (Rice).